Consider the following 115-residue polypeptide: Tyrosine-protein phosphatase 18 (115 aa).

The Tyrosine-protein phosphatase domain occupies 1-115 (WLMIVEQKCR…ETGSDAPMVV (115 aa)). Residue Asp-83 participates in substrate binding.

The protein belongs to the protein-tyrosine phosphatase family.

The catalysed reaction is O-phospho-L-tyrosyl-[protein] + H2O = L-tyrosyl-[protein] + phosphate. In Styela plicata (Wrinkled sea squirt), this protein is Tyrosine-protein phosphatase 18 (STY-18).